Reading from the N-terminus, the 341-residue chain is Basic membrane protein B (341 aa).

A signal peptide spans 1 to 14 (MRIAIFIFGILLTS). Cys-15 carries the N-palmitoyl cysteine lipid modification. Cys-15 carries S-diacylglycerol cysteine lipidation.

It belongs to the BMP lipoprotein family. As to quaternary structure, monomer.

The protein resides in the cell inner membrane. In terms of biological role, may be part of an ABC-type nucleoside uptake system involved in the purine salvage pathway. This Borreliella afzelii (strain PKo) (Borrelia afzelii) protein is Basic membrane protein B (bmpB).